Reading from the N-terminus, the 217-residue chain is Rhicadhesin receptor (217 aa).

The first 20 residues, 1–20 (MKLIAVLLLVVLATATTATA), serve as a signal peptide directing secretion. A disulfide bond links cysteine 30 and cysteine 45. N-linked (GlcNAc...) asparagine glycans are attached at residues asparagine 50 and asparagine 68. Positions 58–207 (SNLLVKQGAT…AFQIGTKEVQ (150 aa)) constitute a Cupin type-1 domain. 4 residues coordinate Mn(2+): histidine 107, histidine 109, glutamate 114, and histidine 153.

Belongs to the germin family. Post-translationally, glycosylated.

It localises to the secreted. It is found in the extracellular space. The protein localises to the apoplast. Its subcellular location is the cell wall. Its function is as follows. Putative receptor for bacterial rhicadhesin, an attachment protein of rhizobiaceae. The chain is Rhicadhesin receptor (GER1) from Pisum sativum (Garden pea).